Reading from the N-terminus, the 151-residue chain is Neuroglobin (151 aa).

The Globin domain occupies Met-1 to Asp-149. Heme b is bound by residues His-64 and His-96.

It belongs to the globin family. Monomer. Homodimer and homotetramer; disulfide-linked. Mainly monomeric but also detected as part of homodimers and homotetramers. Interacts with 14-3-3 proteins; regulates the phosphorylation of NGB. Could interact (ferrous form) with G-alpha(i) proteins (GTP-bound form). Phosphorylated during hypoxia by ERK1/ERK2. Phosphorylation regulates the heme pocket hexacoordination preventing the association of His-64 with the heme metal center. Thereby, promotes the access of dioxygen and nitrite to the heme and stimulates the nitrite reductase activity. Phosphorylation during hypoxia is stabilized by 14-3-3 proteins.

The protein localises to the cytoplasm. The protein resides in the cytosol. It localises to the mitochondrion matrix. It catalyses the reaction Fe(III)-heme b-[protein] + nitric oxide + H2O = Fe(II)-heme b-[protein] + nitrite + 2 H(+). Monomeric globin with a bis-histidyl six-coordinate heme-iron atom through which it can bind dioxygen, carbon monoxide and nitric oxide. Could help transport oxygen and increase its availability to the metabolically active neuronal tissues, though its low quantity in tissues as well as its high affinity for dioxygen, which may limit its oxygen-releasing ability, argue against it. The ferrous/deoxygenated form exhibits a nitrite reductase activity and it could produce nitric oxide which in turn inhibits cellular respiration in response to hypoxia. In its ferrous/deoxygenated state, it may also exhibit GDI (Guanine nucleotide Dissociation Inhibitor) activity toward heterotrimeric G-alpha proteins, thereby regulating signal transduction to facilitate neuroprotective responses in the wake of hypoxia and associated oxidative stress. This chain is Neuroglobin, found in Canis lupus familiaris (Dog).